Reading from the N-terminus, the 87-residue chain is DNA-directed RNA polymerase subunit omega (87 aa).

This sequence belongs to the RNA polymerase subunit omega family. The RNAP catalytic core consists of 2 alpha, 1 beta, 1 beta' and 1 omega subunit. When a sigma factor is associated with the core the holoenzyme is formed, which can initiate transcription.

It carries out the reaction RNA(n) + a ribonucleoside 5'-triphosphate = RNA(n+1) + diphosphate. Its function is as follows. Promotes RNA polymerase assembly. Latches the N- and C-terminal regions of the beta' subunit thereby facilitating its interaction with the beta and alpha subunits. This is DNA-directed RNA polymerase subunit omega from Pseudomonas syringae pv. syringae (strain B728a).